A 509-amino-acid polypeptide reads, in one-letter code: Cardiolipin synthase 1 (509 aa).

3 consecutive transmembrane segments (helical) span residues 4–24, 30–50, and 59–79; these read PIIQLLLIFTIVSIVPFLLNT, YTFVGVLWSITIVGISFVIFI, and LAWFLVLALLPVVGVLLYSIF. PLD phosphodiesterase domains follow at residues 238–265 and 422–449; these read VNYRNHRKIVIVDGEIGFTGGLNVGDEY and KDGFMHAKILLVDDKIATIGTANMDVRS. Active-site residues include His-243, Lys-245, Asp-250, His-427, Lys-429, and Asp-434.

Belongs to the phospholipase D family. Cardiolipin synthase subfamily.

The protein localises to the cell membrane. It carries out the reaction 2 a 1,2-diacyl-sn-glycero-3-phospho-(1'-sn-glycerol) = a cardiolipin + glycerol. Catalyzes the reversible phosphatidyl group transfer from one phosphatidylglycerol molecule to another to form cardiolipin (CL) (diphosphatidylglycerol) and glycerol. The polypeptide is Cardiolipin synthase 1 (cls1) (Bacillus anthracis).